Consider the following 1071-residue polypeptide: ATP-dependent helicase/deoxyribonuclease subunit B (1071 aa).

It belongs to the helicase family. AddB/RexB type 2 subfamily. In terms of assembly, heterodimer of AddA and RexB. It depends on Mg(2+) as a cofactor.

Functionally, the heterodimer acts as both an ATP-dependent DNA helicase and an ATP-dependent, dual-direction single-stranded exonuclease. Recognizes the chi site generating a DNA molecule suitable for the initiation of homologous recombination. This subunit has 5' -&gt; 3' nuclease activity but not helicase activity. The chain is ATP-dependent helicase/deoxyribonuclease subunit B from Streptococcus pyogenes serotype M4 (strain MGAS10750).